Reading from the N-terminus, the 244-residue chain is uncharacterized protein (244 aa).

This is an uncharacterized protein from Ostreid herpesvirus 1 (isolate France) (OsHV-1).